Reading from the N-terminus, the 329-residue chain is Nitrogenase iron-iron protein beta chain (329 aa).

The [8Fe-7S] cluster site is built by Cys-20, Cys-45, Cys-104, and Ser-143. Positions 213–288 (SADGSLVSHG…EEGDGKPIPQ (76 aa)) are disordered. A compositionally biased stretch (basic residues) spans 257-271 (RSRRSSARPRSHPQY).

It belongs to the NifD/NifK/NifE/NifN family. Hexamer of two alpha, two beta, and two delta chains. [8Fe-7S] cluster serves as cofactor.

It carries out the reaction N2 + 8 reduced [2Fe-2S]-[ferredoxin] + 16 ATP + 16 H2O = H2 + 8 oxidized [2Fe-2S]-[ferredoxin] + 2 NH4(+) + 16 ADP + 16 phosphate + 6 H(+). Functionally, this iron-iron protein is part of the nitrogenase complex that catalyzes the key enzymatic reactions in nitrogen fixation. Other nitrogenase complexes utilize a molybdenum-iron protein or a vanadium-iron protein. The chain is Nitrogenase iron-iron protein beta chain (anfK) from Ruminiclostridium hungatei (Clostridium hungatei).